We begin with the raw amino-acid sequence, 379 residues long: Anhydro-N-acetylmuramic acid kinase (379 aa).

An ATP-binding site is contributed by 9-16; it reads GTSADGVD.

It belongs to the anhydro-N-acetylmuramic acid kinase family.

The enzyme catalyses 1,6-anhydro-N-acetyl-beta-muramate + ATP + H2O = N-acetyl-D-muramate 6-phosphate + ADP + H(+). The protein operates within amino-sugar metabolism; 1,6-anhydro-N-acetylmuramate degradation. It participates in cell wall biogenesis; peptidoglycan recycling. Functionally, catalyzes the specific phosphorylation of 1,6-anhydro-N-acetylmuramic acid (anhMurNAc) with the simultaneous cleavage of the 1,6-anhydro ring, generating MurNAc-6-P. Is required for the utilization of anhMurNAc either imported from the medium or derived from its own cell wall murein, and thus plays a role in cell wall recycling. In Prochlorococcus marinus (strain MIT 9313), this protein is Anhydro-N-acetylmuramic acid kinase.